An 852-amino-acid chain; its full sequence is Pentatricopeptide repeat-containing protein At5g02830, chloroplastic (852 aa).

The N-terminal 25 residues, 1–25 (MRDFVIVFGSSSAITNPHHHHRRCY), are a transit peptide targeting the chloroplast. A disordered region spans residues 17-60 (PHHHHRRCYATAPESNRKTKSNSSFTKLLPSLPQQHSPSPASVS). Residues 44-58 (LLPSLPQQHSPSPAS) are compositionally biased toward low complexity. PPR repeat units follow at residues 334 to 364 (DMTSYNILLKTCCLAGRVDLAQDIYKEAKRM), 373 to 407 (DAFTYCTIIKVFADAKMWKWALKVKDDMKSVGVTP), 408 to 442 (NTHTWSSLISACANAGLVEQANHLFEEMLASGCEP), 443 to 477 (NSQCFNILLHACVEACQYDRAFRLFQSWKGSSVNE), 525 to 557 (TTATYNILLKACGTDYYRGKELMDEMKSLGLSP), 558 to 592 (NQITWSTLIDMCGGSGDVEGAVRILRTMHSAGTRP), 593 to 627 (DVVAYTTAIKICAENKCLKLAFSLFEEMRRYQIKP), and 628 to 665 (NWVTYNTLLKARSKYGSLLEVRQCLAIYQDMRNAGYKP).

This sequence belongs to the PPR family. P subfamily.

Its subcellular location is the plastid. The protein localises to the chloroplast. This chain is Pentatricopeptide repeat-containing protein At5g02830, chloroplastic, found in Arabidopsis thaliana (Mouse-ear cress).